Reading from the N-terminus, the 300-residue chain is Cis-3-alkyl-4-alkyloxetan-2-one decarboxylase (300 aa).

The 250-residue stretch at 33 to 282 folds into the AB hydrolase-1 domain; sequence VVVMLHGNPS…DDANHYVLED (250 aa).

This sequence belongs to the AB hydrolase superfamily. As to quaternary structure, homotetramer. Forms a complex with OleC and OleD.

The protein resides in the cytoplasm. It catalyses the reaction a cis-3-alkyl-4-alkyloxetan-2-one = a cis-alkene + CO2. In terms of biological role, involved in olefin biosynthesis. Catalyzes the elimination of carbon dioxide from beta-lactones to form the final olefin product. The sequence is that of Cis-3-alkyl-4-alkyloxetan-2-one decarboxylase from Xanthomonas campestris pv. campestris (strain ATCC 33913 / DSM 3586 / NCPPB 528 / LMG 568 / P 25).